Here is a 101-residue protein sequence, read N- to C-terminus: Large ribosomal subunit protein uL24 (101 aa).

It belongs to the universal ribosomal protein uL24 family. In terms of assembly, part of the 50S ribosomal subunit.

Its function is as follows. One of two assembly initiator proteins, it binds directly to the 5'-end of the 23S rRNA, where it nucleates assembly of the 50S subunit. Functionally, one of the proteins that surrounds the polypeptide exit tunnel on the outside of the subunit. This Streptococcus pyogenes serotype M1 protein is Large ribosomal subunit protein uL24.